A 129-amino-acid polypeptide reads, in one-letter code: Urease subunit beta (129 aa).

Belongs to the urease beta subunit family. As to quaternary structure, heterotrimer of UreA (gamma), UreB (beta) and UreC (alpha) subunits. Three heterotrimers associate to form the active enzyme.

It is found in the cytoplasm. It carries out the reaction urea + 2 H2O + H(+) = hydrogencarbonate + 2 NH4(+). The protein operates within nitrogen metabolism; urea degradation; CO(2) and NH(3) from urea (urease route): step 1/1. The sequence is that of Urease subunit beta from Photorhabdus laumondii subsp. laumondii (strain DSM 15139 / CIP 105565 / TT01) (Photorhabdus luminescens subsp. laumondii).